The chain runs to 217 residues: MEEAKHIEAVEAKQIEAEEAQRIKAGEAKQIEAGETSRSSRKVITFEPKLVINKGISVLGFVLRLFAVFGTIGSALAMGTTHESVVSLSQLVLLKVKYSDLPTLMFFVVANAIAGGYLVLSLPVSIFHIFSTKAKTSRIILLVIDTVMLALVSSGASAATATVYLAHEGNTTANWPPICQQFDGFCERISGSLIGSFCAVILLMLIVINSAISLSRH.

The Cytoplasmic segment spans residues 1-57; the sequence is MEEAKHIEAVEAKQIEAEEAQRIKAGEAKQIEAGETSRSSRKVITFEPKLVINKGIS. A helical membrane pass occupies residues 58–78; it reads VLGFVLRLFAVFGTIGSALAM. The Extracellular segment spans residues 79–103; it reads GTTHESVVSLSQLVLLKVKYSDLPT. Residues 104–124 form a helical membrane-spanning segment; it reads LMFFVVANAIAGGYLVLSLPV. Residues 125–138 lie on the Cytoplasmic side of the membrane; sequence SIFHIFSTKAKTSR. The helical transmembrane segment at 139–159 threads the bilayer; it reads IILLVIDTVMLALVSSGASAA. Residues 160-191 are Extracellular-facing; that stretch reads TATVYLAHEGNTTANWPPICQQFDGFCERISG. N170 is a glycosylation site (N-linked (GlcNAc...) asparagine). A helical membrane pass occupies residues 192 to 212; sequence SLIGSFCAVILLMLIVINSAI. The Cytoplasmic portion of the chain corresponds to 213–217; it reads SLSRH.

The protein belongs to the Casparian strip membrane proteins (CASP) family. In terms of assembly, homodimer and heterodimers.

Its subcellular location is the cell membrane. In terms of biological role, regulates membrane-cell wall junctions and localized cell wall deposition. Required for establishment of the Casparian strip membrane domain (CSD) and the subsequent formation of Casparian strips, a cell wall modification of the root endodermis that determines an apoplastic barrier between the intraorganismal apoplasm and the extraorganismal apoplasm and prevents lateral diffusion. The protein is Casparian strip membrane protein 6 of Arabidopsis lyrata subsp. lyrata (Lyre-leaved rock-cress).